A 360-amino-acid chain; its full sequence is Phospho-N-acetylmuramoyl-pentapeptide-transferase (360 aa).

Transmembrane regions (helical) follow at residues 27–47 (IVSL…LIGW), 72–92 (PTMG…MWAY), 94–114 (SNPY…VGFV), 132–152 (WKYF…YCIG), 168–188 (IMPQ…VGTS), 199–219 (GLAI…AWAT), 236–256 (AGEL…FLWF), 263–283 (VFMG…IAVL), 288–308 (FLLV…ILQV), and 338–358 (VIVR…ATLK).

This sequence belongs to the glycosyltransferase 4 family. MraY subfamily. The cofactor is Mg(2+).

Its subcellular location is the cell inner membrane. The enzyme catalyses UDP-N-acetyl-alpha-D-muramoyl-L-alanyl-gamma-D-glutamyl-meso-2,6-diaminopimeloyl-D-alanyl-D-alanine + di-trans,octa-cis-undecaprenyl phosphate = di-trans,octa-cis-undecaprenyl diphospho-N-acetyl-alpha-D-muramoyl-L-alanyl-D-glutamyl-meso-2,6-diaminopimeloyl-D-alanyl-D-alanine + UMP. It participates in cell wall biogenesis; peptidoglycan biosynthesis. Its function is as follows. Catalyzes the initial step of the lipid cycle reactions in the biosynthesis of the cell wall peptidoglycan: transfers peptidoglycan precursor phospho-MurNAc-pentapeptide from UDP-MurNAc-pentapeptide onto the lipid carrier undecaprenyl phosphate, yielding undecaprenyl-pyrophosphoryl-MurNAc-pentapeptide, known as lipid I. The sequence is that of Phospho-N-acetylmuramoyl-pentapeptide-transferase from Edwardsiella ictaluri (strain 93-146).